The sequence spans 144 residues: Large ribosomal subunit protein uL15 (144 aa).

Residues 1-53 (MRLNTLSPAEGAKHAPKRLGRGIGSGLGKTGGRGHKGQNSRSGGGVRRGFEGG) are disordered. The span at 21 to 31 (RGIGSGLGKTG) shows a compositional bias: gly residues.

This sequence belongs to the universal ribosomal protein uL15 family. As to quaternary structure, part of the 50S ribosomal subunit.

In terms of biological role, binds to the 23S rRNA. This chain is Large ribosomal subunit protein uL15, found in Pectobacterium atrosepticum (strain SCRI 1043 / ATCC BAA-672) (Erwinia carotovora subsp. atroseptica).